A 359-amino-acid chain; its full sequence is Non-classical arabinogalactan protein 31 (359 aa).

The first 24 residues, 1 to 24, serve as a signal peptide directing secretion; sequence MGFIGKSVLVSLVALWCFTSSVFT. A disordered region spans residues 31-215; sequence TQTPSLAPAP…PPVSPPTKPP (185 aa). The span at 44-66 shows a compositional bias: basic residues; sequence HHGHHHPHPPHHHHPHPHPHPHP. The segment covering 67–215 has biased composition (pro residues); that stretch reads PAKSPVKPPV…PPVSPPTKPP (149 aa). A 4-hydroxyproline mark is found at Pro-71, Pro-75, Pro-79, Pro-82, Pro-83, Pro-87, Pro-91, Pro-95, Pro-99, Pro-103, Pro-107, Pro-111, Pro-114, Pro-115, Pro-119, Pro-123, Pro-127, Pro-131, Pro-135, Pro-139, Pro-143, Pro-147, Pro-151, Pro-155, Pro-159, Pro-163, Pro-167, Pro-171, Pro-175, Pro-179, Pro-183, Pro-186, Pro-187, Pro-191, Pro-195, Pro-199, Pro-203, Pro-207, Pro-210, Pro-211, Pro-215, and Pro-219. O-linked (Ara...) hydroxyproline glycans are attached at residues Pro-71, Pro-75, Pro-79, Pro-82, Pro-83, Pro-87, Pro-91, Pro-95, Pro-99, Pro-103, Pro-107, Pro-111, Pro-114, Pro-115, Pro-119, Pro-123, Pro-127, Pro-131, Pro-135, Pro-139, Pro-143, Pro-147, Pro-151, Pro-155, Pro-159, Pro-163, Pro-167, Pro-171, Pro-175, Pro-179, Pro-183, Pro-186, Pro-187, Pro-191, Pro-195, Pro-199, Pro-203, Pro-207, Pro-210, Pro-211, Pro-215, and Pro-219. The stretch at 90–109 is repeat 1; the sequence is PPVYPPTKAPVKPPTKPPVK. 3 tandem repeats follow at residues 122 to 141, 142 to 161, and 162 to 181. 2 N-linked (GlcNAc...) asparagine glycosylation sites follow: Asn-226 and Asn-269.

This sequence belongs to the non-classical AGP family. In terms of processing, hydroxylated on numerous prolines in the proline-rich region. O-glycosylated on numerous hydroxyprolines in the proline-rich region; noncontiguous hydroxylproline residues are glycosylated with arabinogalactan. As to expression, expressed in vascular bundles of roots, leaves, sepals and stamen filaments, and pistils but not stigma.

It localises to the secreted. The protein resides in the cell wall. Proteoglycan that may contribute to the strengthening of cell walls. The sequence is that of Non-classical arabinogalactan protein 31 from Arabidopsis thaliana (Mouse-ear cress).